The sequence spans 216 residues: 3-isopropylmalate dehydratase small subunit 1 (216 aa).

Belongs to the LeuD family. LeuD type 1 subfamily. As to quaternary structure, heterodimer of LeuC and LeuD.

The enzyme catalyses (2R,3S)-3-isopropylmalate = (2S)-2-isopropylmalate. Its pathway is amino-acid biosynthesis; L-leucine biosynthesis; L-leucine from 3-methyl-2-oxobutanoate: step 2/4. Catalyzes the isomerization between 2-isopropylmalate and 3-isopropylmalate, via the formation of 2-isopropylmaleate. This is 3-isopropylmalate dehydratase small subunit 1 from Bordetella bronchiseptica (strain ATCC BAA-588 / NCTC 13252 / RB50) (Alcaligenes bronchisepticus).